The primary structure comprises 275 residues: Expansin-A23 (275 aa).

Residues 1-27 form the signal peptide; that stretch reads MNLLGKMIYVEGFMMIMATLLVSMSYG. Residues 72-182 form the Expansin-like EG45 domain; sequence QGACGYGDLF…RRISCARTGG (111 aa). Positions 192 to 271 constitute an Expansin-like CBD domain; sequence YFLMILPYNV…NWGFGQTFDG (80 aa).

The protein belongs to the expansin family. Expansin A subfamily.

Its subcellular location is the secreted. The protein localises to the cell wall. It is found in the membrane. Its function is as follows. Causes loosening and extension of plant cell walls by disrupting non-covalent bonding between cellulose microfibrils and matrix glucans. No enzymatic activity has been found. The protein is Expansin-A23 (EXPA23) of Arabidopsis thaliana (Mouse-ear cress).